The primary structure comprises 154 residues: Insulin-like growth factor 1 (154 aa).

Residues 50-78 (GPETLCGAELVDALQFVCGDRGFYFNKPT) are b. 3 disulfides stabilise this stretch: cysteine 55/cysteine 97, cysteine 67/cysteine 110, and cysteine 96/cysteine 101. A c region spans residues 79-90 (GYGSSSRRAPQT). Positions 91–111 (GIVDECCFRSCDLRRLEMYCA) are a. The interval 112–119 (PLKPAKSA) is d. A propeptide spans 120-154 (RSVRAQRHTDMPKAQKEVHLKNTSRGSAGNKNYRM) (e peptide). The tract at residues 121 to 154 (SVRAQRHTDMPKAQKEVHLKNTSRGSAGNKNYRM) is disordered. The segment covering 126–139 (RHTDMPKAQKEVHL) has biased composition (basic and acidic residues). Residues 140 to 154 (KNTSRGSAGNKNYRM) show a composition bias toward polar residues.

This sequence belongs to the insulin family. In terms of assembly, forms a ternary complex with IGFR1 and ITGAV:ITGB3. Forms a ternary complex with IGFR1 and ITGA6:ITGB4. Forms a ternary complex with IGFBP3 and ALS.

It localises to the secreted. Functionally, the insulin-like growth factors, isolated from plasma, are structurally and functionally related to insulin but have a much higher growth-promoting activity. May be a physiological regulator of [1-14C]-2-deoxy-D-glucose (2DG) transport and glycogen synthesis in osteoblasts. Stimulates glucose transport in bone-derived osteoblastic (PyMS) cells and is effective at much lower concentrations than insulin, not only regarding glycogen and DNA synthesis but also with regard to enhancing glucose uptake. May play a role in synapse maturation. Ca(2+)-dependent exocytosis of IGF1 is required for sensory perception of smell in the olfactory bulb. Acts as a ligand for IGF1R. Binds to the alpha subunit of IGF1R, leading to the activation of the intrinsic tyrosine kinase activity which autophosphorylates tyrosine residues in the beta subunit thus initiating a cascade of down-stream signaling events leading to activation of the PI3K-AKT/PKB and the Ras-MAPK pathways. Binds to integrins ITGAV:ITGB3 and ITGA6:ITGB4. Its binding to integrins and subsequent ternary complex formation with integrins and IGFR1 are essential for IGF1 signaling. Induces the phosphorylation and activation of IGFR1, MAPK3/ERK1, MAPK1/ERK2 and AKT1. As part of the MAPK/ERK signaling pathway, acts as a negative regulator of apoptosis in cardiomyocytes via promotion of STUB1/CHIP-mediated ubiquitination and degradation of ICER-type isoforms of CREM. This Bos taurus (Bovine) protein is Insulin-like growth factor 1.